The primary structure comprises 333 residues: Glycerol-3-phosphate dehydrogenase [NAD(P)+] (333 aa).

Residues Ser-10, Trp-11, His-31, Arg-32, and Lys-105 each contribute to the NADPH site. Sn-glycerol 3-phosphate contacts are provided by Lys-105, Gly-136, and Ser-138. Ala-140 is an NADPH binding site. Residues Lys-191, Asp-244, Ser-254, Arg-255, and Asn-256 each coordinate sn-glycerol 3-phosphate. The active-site Proton acceptor is Lys-191. Arg-255 provides a ligand contact to NADPH. NADPH is bound by residues Val-279 and Glu-281.

Belongs to the NAD-dependent glycerol-3-phosphate dehydrogenase family.

The protein resides in the cytoplasm. The enzyme catalyses sn-glycerol 3-phosphate + NAD(+) = dihydroxyacetone phosphate + NADH + H(+). The catalysed reaction is sn-glycerol 3-phosphate + NADP(+) = dihydroxyacetone phosphate + NADPH + H(+). Its pathway is membrane lipid metabolism; glycerophospholipid metabolism. In terms of biological role, catalyzes the reduction of the glycolytic intermediate dihydroxyacetone phosphate (DHAP) to sn-glycerol 3-phosphate (G3P), the key precursor for phospholipid synthesis. In Chlorobium limicola (strain DSM 245 / NBRC 103803 / 6330), this protein is Glycerol-3-phosphate dehydrogenase [NAD(P)+].